The sequence spans 660 residues: Bifunctional polymyxin resistance protein ArnA (660 aa).

The segment at 1 to 304 (MKAVVFAYHD…TLGLVEGSRL (304 aa)) is formyltransferase ArnAFT. H104 functions as the Proton donor; for formyltransferase activity in the catalytic mechanism. (6R)-10-formyltetrahydrofolate contacts are provided by residues R114 and 136–140 (VAKAD). The interval 314-660 (RRTRVLILGV…RTVDIVEKSS (347 aa)) is dehydrogenase ArnADH. NAD(+) contacts are provided by residues D347 and 368–369 (DI). Residues A393, Y398, and 432-433 (TS) each bind UDP-alpha-D-glucuronate. The active-site Proton acceptor; for decarboxylase activity is E434. Residues R460, N492, 526 to 535 (KLIDGGKQKR), and Y613 contribute to the UDP-alpha-D-glucuronate site. Residue R619 is the Proton donor; for decarboxylase activity of the active site.

It in the N-terminal section; belongs to the Fmt family. UDP-L-Ara4N formyltransferase subfamily. In the C-terminal section; belongs to the NAD(P)-dependent epimerase/dehydratase family. UDP-glucuronic acid decarboxylase subfamily. As to quaternary structure, homohexamer, formed by a dimer of trimers.

The catalysed reaction is UDP-alpha-D-glucuronate + NAD(+) = UDP-beta-L-threo-pentopyranos-4-ulose + CO2 + NADH. It carries out the reaction UDP-4-amino-4-deoxy-beta-L-arabinose + (6R)-10-formyltetrahydrofolate = UDP-4-deoxy-4-formamido-beta-L-arabinose + (6S)-5,6,7,8-tetrahydrofolate + H(+). It participates in nucleotide-sugar biosynthesis; UDP-4-deoxy-4-formamido-beta-L-arabinose biosynthesis; UDP-4-deoxy-4-formamido-beta-L-arabinose from UDP-alpha-D-glucuronate: step 1/3. Its pathway is nucleotide-sugar biosynthesis; UDP-4-deoxy-4-formamido-beta-L-arabinose biosynthesis; UDP-4-deoxy-4-formamido-beta-L-arabinose from UDP-alpha-D-glucuronate: step 3/3. It functions in the pathway bacterial outer membrane biogenesis; lipopolysaccharide biosynthesis. Functionally, bifunctional enzyme that catalyzes the oxidative decarboxylation of UDP-glucuronic acid (UDP-GlcUA) to UDP-4-keto-arabinose (UDP-Ara4O) and the addition of a formyl group to UDP-4-amino-4-deoxy-L-arabinose (UDP-L-Ara4N) to form UDP-L-4-formamido-arabinose (UDP-L-Ara4FN). The modified arabinose is attached to lipid A and is required for resistance to polymyxin and cationic antimicrobial peptides. The polypeptide is Bifunctional polymyxin resistance protein ArnA (Escherichia fergusonii (strain ATCC 35469 / DSM 13698 / CCUG 18766 / IAM 14443 / JCM 21226 / LMG 7866 / NBRC 102419 / NCTC 12128 / CDC 0568-73)).